Consider the following 245-residue polypeptide: MAAVSGMRRTRTVSPTRWIVYAGSVFAGAWLATQLFYLVQIALWSFINPGSTAFMRTDAWWLSRDKPPAQVQHQWVPYDQISRNLKRALIASEDSTFATNNGYDVDAILQAWEKNKARGRIVAGGSTITQQLARNLFLSREKSYIRKGQELIITWMLETVLDKERIFEIYLNSVEWGRGVYGAEAAARYYYRIPASRLGAWQSARLAVMLPKPRWFDAHRGSAYQAQRAAVIARRMGAAELPQSQ.

A helical membrane pass occupies residues 20-42 (VYAGSVFAGAWLATQLFYLVQIA).

This sequence belongs to the glycosyltransferase 51 family.

It localises to the cell inner membrane. The catalysed reaction is [GlcNAc-(1-&gt;4)-Mur2Ac(oyl-L-Ala-gamma-D-Glu-L-Lys-D-Ala-D-Ala)](n)-di-trans,octa-cis-undecaprenyl diphosphate + beta-D-GlcNAc-(1-&gt;4)-Mur2Ac(oyl-L-Ala-gamma-D-Glu-L-Lys-D-Ala-D-Ala)-di-trans,octa-cis-undecaprenyl diphosphate = [GlcNAc-(1-&gt;4)-Mur2Ac(oyl-L-Ala-gamma-D-Glu-L-Lys-D-Ala-D-Ala)](n+1)-di-trans,octa-cis-undecaprenyl diphosphate + di-trans,octa-cis-undecaprenyl diphosphate + H(+). It functions in the pathway cell wall biogenesis; peptidoglycan biosynthesis. In terms of biological role, peptidoglycan polymerase that catalyzes glycan chain elongation from lipid-linked precursors. This is Biosynthetic peptidoglycan transglycosylase from Burkholderia ambifaria (strain ATCC BAA-244 / DSM 16087 / CCUG 44356 / LMG 19182 / AMMD) (Burkholderia cepacia (strain AMMD)).